Here is a 244-residue protein sequence, read N- to C-terminus: Large ribosomal subunit protein uL30A (244 aa).

The disordered stretch occupies residues 1–26 (MAAEKILTPESQLKKSKAQQKTAEQV).

This sequence belongs to the universal ribosomal protein uL30 family. As to quaternary structure, component of the large ribosomal subunit (LSU). Mature yeast ribosomes consist of a small (40S) and a large (60S) subunit. The 40S small subunit contains 1 molecule of ribosomal RNA (18S rRNA) and 33 different proteins (encoded by 57 genes). The large 60S subunit contains 3 rRNA molecules (25S, 5.8S and 5S rRNA) and 46 different proteins (encoded by 81 genes).

The protein localises to the cytoplasm. Component of the ribosome, a large ribonucleoprotein complex responsible for the synthesis of proteins in the cell. The small ribosomal subunit (SSU) binds messenger RNAs (mRNAs) and translates the encoded message by selecting cognate aminoacyl-transfer RNA (tRNA) molecules. The large subunit (LSU) contains the ribosomal catalytic site termed the peptidyl transferase center (PTC), which catalyzes the formation of peptide bonds, thereby polymerizing the amino acids delivered by tRNAs into a polypeptide chain. The nascent polypeptides leave the ribosome through a tunnel in the LSU and interact with protein factors that function in enzymatic processing, targeting, and the membrane insertion of nascent chains at the exit of the ribosomal tunnel. In Saccharomyces cerevisiae (strain ATCC 204508 / S288c) (Baker's yeast), this protein is Large ribosomal subunit protein uL30A.